The primary structure comprises 443 residues: 3-phosphoshikimate 1-carboxyvinyltransferase (443 aa).

Lys-25, Ser-26, and Arg-30 together coordinate 3-phosphoshikimate. Lys-25 provides a ligand contact to phosphoenolpyruvate. Phosphoenolpyruvate contacts are provided by Gly-117 and Arg-145. 3-phosphoshikimate-binding residues include Ser-188, Ser-189, Gln-190, Ser-217, Glu-331, and His-358. Gln-190 provides a ligand contact to phosphoenolpyruvate. The active-site Proton acceptor is Glu-331. Arg-362, Arg-404, and Lys-428 together coordinate phosphoenolpyruvate.

The protein belongs to the EPSP synthase family. Monomer.

It is found in the cytoplasm. It carries out the reaction 3-phosphoshikimate + phosphoenolpyruvate = 5-O-(1-carboxyvinyl)-3-phosphoshikimate + phosphate. The protein operates within metabolic intermediate biosynthesis; chorismate biosynthesis; chorismate from D-erythrose 4-phosphate and phosphoenolpyruvate: step 6/7. Functionally, catalyzes the transfer of the enolpyruvyl moiety of phosphoenolpyruvate (PEP) to the 5-hydroxyl of shikimate-3-phosphate (S3P) to produce enolpyruvyl shikimate-3-phosphate and inorganic phosphate. This chain is 3-phosphoshikimate 1-carboxyvinyltransferase, found in Tropheryma whipplei (strain TW08/27) (Whipple's bacillus).